The chain runs to 759 residues: 5-methyltetrahydropteroyltriglutamate--homocysteine methyltransferase (759 aa).

Over residues 1–16 (MTQPVRRQPFTATITG) the composition is skewed to polar residues. A disordered region spans residues 1–22 (MTQPVRRQPFTATITGSPRIGP). Residues 24 to 27 (RELK) and K118 each bind 5-methyltetrahydropteroyltri-L-glutamate. Residues 437-439 (IGS) and E490 contribute to the L-homocysteine site. Residues 437–439 (IGS) and E490 contribute to the L-methionine site. Residues 521–522 (RC) and W567 contribute to the 5-methyltetrahydropteroyltri-L-glutamate site. D605 provides a ligand contact to L-homocysteine. D605 contributes to the L-methionine binding site. E611 contacts 5-methyltetrahydropteroyltri-L-glutamate. Residues H647, C649, and E671 each coordinate Zn(2+). The Proton donor role is filled by H700. C732 lines the Zn(2+) pocket.

The protein belongs to the vitamin-B12 independent methionine synthase family. Requires Zn(2+) as cofactor.

It carries out the reaction 5-methyltetrahydropteroyltri-L-glutamate + L-homocysteine = tetrahydropteroyltri-L-glutamate + L-methionine. It participates in amino-acid biosynthesis; L-methionine biosynthesis via de novo pathway; L-methionine from L-homocysteine (MetE route): step 1/1. In terms of biological role, catalyzes the transfer of a methyl group from 5-methyltetrahydrofolate to homocysteine resulting in methionine formation. This is 5-methyltetrahydropteroyltriglutamate--homocysteine methyltransferase from Mycobacterium tuberculosis (strain ATCC 25177 / H37Ra).